Here is a 565-residue protein sequence, read N- to C-terminus: DNA mismatch repair protein MutL (565 aa).

This sequence belongs to the DNA mismatch repair MutL/HexB family.

Functionally, this protein is involved in the repair of mismatches in DNA. It is required for dam-dependent methyl-directed DNA mismatch repair. May act as a 'molecular matchmaker', a protein that promotes the formation of a stable complex between two or more DNA-binding proteins in an ATP-dependent manner without itself being part of a final effector complex. The chain is DNA mismatch repair protein MutL from Desulforudis audaxviator (strain MP104C).